The sequence spans 404 residues: Glucose-1-phosphate adenylyltransferase (404 aa).

Alpha-D-glucose 1-phosphate is bound by residues Tyr-99, Gly-164, 179–180 (EK), and Ser-197.

Belongs to the bacterial/plant glucose-1-phosphate adenylyltransferase family.

The enzyme catalyses alpha-D-glucose 1-phosphate + ATP + H(+) = ADP-alpha-D-glucose + diphosphate. It participates in glycan biosynthesis; glycogen biosynthesis. Involved in the biosynthesis of ADP-glucose building block, required in the biosynthesis of maltose-1-phosphate (M1P) and in the elongation reactions to produce linear alpha-1,4-glucans. Catalyzes the reaction between ATP and alpha-D-glucose 1-phosphate (G1P) to produce pyrophosphate and ADP-Glc. In Mycolicibacterium smegmatis (strain ATCC 700084 / mc(2)155) (Mycobacterium smegmatis), this protein is Glucose-1-phosphate adenylyltransferase.